Reading from the N-terminus, the 97-residue chain is Large ribosomal subunit protein uL23 (97 aa).

The protein belongs to the universal ribosomal protein uL23 family. In terms of assembly, part of the 50S ribosomal subunit. Contacts protein L29, and trigger factor when it is bound to the ribosome.

Functionally, one of the early assembly proteins it binds 23S rRNA. One of the proteins that surrounds the polypeptide exit tunnel on the outside of the ribosome. Forms the main docking site for trigger factor binding to the ribosome. The chain is Large ribosomal subunit protein uL23 from Myxococcus xanthus (strain DK1622).